Here is a 315-residue protein sequence, read N- to C-terminus: Heme oxygenase 2 (315 aa).

A compositionally biased stretch (polar residues) spans 1 to 15; it reads MSSEVETSEGVDESE. Residues 1 to 29 form a disordered region; that stretch reads MSSEVETSEGVDESENNSTAPEKENHTKM. S2 carries the N-acetylserine modification. S2 is subject to Phosphoserine. At 2-294 the chain is on the cytoplasmic side; it reads SSEVETSEGV…TAMAVLRKPS (293 aa). Heme b contacts are provided by H44, Y153, K198, and R202. 2 HRM repeats span residues 263 to 268 and 280 to 285; these read KCPFYA and NCPFRT. Residues C264 and C281 each carry the S-nitrosocysteine modification. The chain crosses the membrane as a helical; Anchor for type IV membrane protein span at residues 295–315; sequence LQLILAASVALVAGLLAWYYM.

The protein belongs to the heme oxygenase family. A soluble form arises by proteolytic removal of the membrane anchor. Post-translationally, S-nitrosylated by BLVRB. As to expression, widely distributed in body with a high concentration in the brain.

It localises to the microsome membrane. The protein resides in the endoplasmic reticulum membrane. It carries out the reaction heme b + 3 reduced [NADPH--hemoprotein reductase] + 3 O2 = biliverdin IXalpha + CO + Fe(2+) + 3 oxidized [NADPH--hemoprotein reductase] + 3 H2O + H(+). Its activity is regulated as follows. Inhibited by metalloporphyrins such as Sn- and Zn-protoporphyrins. Its function is as follows. Catalyzes the oxidative cleavage of heme at the alpha-methene bridge carbon, released as carbon monoxide (CO), to generate biliverdin IXalpha, while releasing the central heme iron chelate as ferrous iron. The protein is Heme oxygenase 2 (Hmox2) of Rattus norvegicus (Rat).